The primary structure comprises 296 residues: N-acetylmuramic acid 6-phosphate etherase (296 aa).

The region spanning 54–217 is the SIS domain; that stretch reads VISCFQKGGR…STASMVGIGK (164 aa). Glu82 functions as the Proton donor in the catalytic mechanism. The active site involves Glu113.

Belongs to the GCKR-like family. MurNAc-6-P etherase subfamily. In terms of assembly, homodimer.

It carries out the reaction N-acetyl-D-muramate 6-phosphate + H2O = N-acetyl-D-glucosamine 6-phosphate + (R)-lactate. It functions in the pathway amino-sugar metabolism; N-acetylmuramate degradation. In terms of biological role, specifically catalyzes the cleavage of the D-lactyl ether substituent of MurNAc 6-phosphate, producing GlcNAc 6-phosphate and D-lactate. The chain is N-acetylmuramic acid 6-phosphate etherase from Listeria monocytogenes serotype 4b (strain CLIP80459).